The following is a 304-amino-acid chain: D-alanine--D-alanine ligase (304 aa).

One can recognise an ATP-grasp domain in the interval 99–293 (KKILRYEGIE…YSKLLDMIIE (195 aa)). An ATP-binding site is contributed by 126-181 (LDKLGFPLVVKPNSGGSSVGVKIVYDKDELISMLETVFEWDSEVVIEKYIKGEEIT). Mg(2+) is bound by residues Asp248, Glu260, and Asn262.

This sequence belongs to the D-alanine--D-alanine ligase family. Mg(2+) is required as a cofactor. Requires Mn(2+) as cofactor.

It localises to the cytoplasm. It carries out the reaction 2 D-alanine + ATP = D-alanyl-D-alanine + ADP + phosphate + H(+). Its pathway is cell wall biogenesis; peptidoglycan biosynthesis. In terms of biological role, cell wall formation. This is D-alanine--D-alanine ligase from Bacillus anthracis (strain A0248).